We begin with the raw amino-acid sequence, 168 residues long: Mitochondrial import inner membrane translocase subunit TIM14 (168 aa).

Residues 1 to 12 are compositionally biased toward polar residues; it reads MSSQSNTGNSIE. Residues 1–29 form a disordered region; that stretch reads MSSQSNTGNSIEAPQLPIPGQTNGSANVT. Topologically, residues 1–65 are mitochondrial intermembrane; the sequence is MSSQSNTGNS…QALNYMGEHP (65 aa). A helical membrane pass occupies residues 66–83; the sequence is VITGFGAFLTLYFTAGAY. Topologically, residues 84 to 168 are mitochondrial matrix; the sequence is KSISKGLNGG…DFLEKRGISK (85 aa). A J domain is found at 112–168; that stretch reads EALQILNLTENTLTKKKLKEVHRKIMLANHPDKGGSPFLATKINEAKDFLEKRGISK.

Belongs to the TIM14 family. In terms of assembly, homodimer and heterodimer with PAM16/TIM16. Homodimerization may not be relevant in vivo, while heterodimerization is essential for activity regulation of mtHSP70. Component of the PAM complex, at least composed of mtHsp70, MGE1, TIM44, PAM16, PAM17 and PAM18/TIM14. Interacts directly with mtHsp70. Interacts directly with TIM17 subunit of the TIM23 complex.

It localises to the mitochondrion inner membrane. Its function is as follows. Essential component of the PAM complex, a complex required for the translocation of transit peptide-containing proteins from the inner membrane into the mitochondrial matrix in an ATP-dependent manner. In the complex, it is required to stimulate activity of mtHSP70 (SSC1). The sequence is that of Mitochondrial import inner membrane translocase subunit TIM14 (PAM18) from Saccharomyces cerevisiae (strain ATCC 204508 / S288c) (Baker's yeast).